The sequence spans 340 residues: uncharacterized protein (340 aa).

The next 2 membrane-spanning stretches (helical) occupy residues 162–182 (PLVPLVAGPLPVAFFIGVLAG) and 239–259 (FWIALYFPLTMRSLCNAIVVP).

The protein localises to the cell membrane. This is an uncharacterized protein from Mycobacterium tuberculosis (strain CDC 1551 / Oshkosh).